The chain runs to 268 residues: Eukaryotic translation initiation factor 3 subunit J (268 aa).

3 disordered regions span residues 1-27 (MSWDDEEFEVRTSTKDQPMVVSWDDEF), 40-63 (DAEEVPKQKQKPKAAPKAAKKVDK), and 217-249 (LAKVKGGTATGGAGKKKAKAARPNLGGAFKKDQ). A compositionally biased stretch (basic residues) spans 47-58 (QKQKPKAAPKAA). A coiled-coil region spans residues 191–221 (IESIRQTVATLNVLIKEKERQERQARLAKVK).

Belongs to the eIF-3 subunit J family. Component of the eukaryotic translation initiation factor 3 (eIF-3) complex.

The protein resides in the cytoplasm. Its function is as follows. Component of the eukaryotic translation initiation factor 3 (eIF-3) complex, which is involved in protein synthesis of a specialized repertoire of mRNAs and, together with other initiation factors, stimulates binding of mRNA and methionyl-tRNAi to the 40S ribosome. The eIF-3 complex specifically targets and initiates translation of a subset of mRNAs involved in cell proliferation. The polypeptide is Eukaryotic translation initiation factor 3 subunit J (Eremothecium gossypii (strain ATCC 10895 / CBS 109.51 / FGSC 9923 / NRRL Y-1056) (Yeast)).